The following is a 277-amino-acid chain: uncharacterized protein (277 aa).

Residues 139–167 form an SWIM-type zinc finger; it reads TARELSLDCSCPDYAVPCKHLAATFYLLA.

This is an uncharacterized protein from Mycobacterium tuberculosis (strain ATCC 25618 / H37Rv).